A 442-amino-acid polypeptide reads, in one-letter code: UDP-N-acetylmuramate--L-alanine ligase (442 aa).

109-115 serves as a coordination point for ATP; that stretch reads GAHGKTS.

The protein belongs to the MurCDEF family.

Its subcellular location is the cytoplasm. The catalysed reaction is UDP-N-acetyl-alpha-D-muramate + L-alanine + ATP = UDP-N-acetyl-alpha-D-muramoyl-L-alanine + ADP + phosphate + H(+). It functions in the pathway cell wall biogenesis; peptidoglycan biosynthesis. In terms of biological role, cell wall formation. The chain is UDP-N-acetylmuramate--L-alanine ligase from Streptococcus pyogenes serotype M6 (strain ATCC BAA-946 / MGAS10394).